A 138-amino-acid polypeptide reads, in one-letter code: Putative pre-16S rRNA nuclease (138 aa).

It belongs to the YqgF nuclease family.

The protein localises to the cytoplasm. Functionally, could be a nuclease involved in processing of the 5'-end of pre-16S rRNA. The sequence is that of Putative pre-16S rRNA nuclease from Azobacteroides pseudotrichonymphae genomovar. CFP2.